We begin with the raw amino-acid sequence, 188 residues long: Crossover junction endodeoxyribonuclease RuvC (188 aa).

Residues Asp7, Glu68, and Asp141 contribute to the active site. 3 residues coordinate Mg(2+): Asp7, Glu68, and Asp141.

The protein belongs to the RuvC family. Homodimer which binds Holliday junction (HJ) DNA. The HJ becomes 2-fold symmetrical on binding to RuvC with unstacked arms; it has a different conformation from HJ DNA in complex with RuvA. In the full resolvosome a probable DNA-RuvA(4)-RuvB(12)-RuvC(2) complex forms which resolves the HJ. Mg(2+) serves as cofactor.

The protein localises to the cytoplasm. The enzyme catalyses Endonucleolytic cleavage at a junction such as a reciprocal single-stranded crossover between two homologous DNA duplexes (Holliday junction).. Functionally, the RuvA-RuvB-RuvC complex processes Holliday junction (HJ) DNA during genetic recombination and DNA repair. Endonuclease that resolves HJ intermediates. Cleaves cruciform DNA by making single-stranded nicks across the HJ at symmetrical positions within the homologous arms, yielding a 5'-phosphate and a 3'-hydroxyl group; requires a central core of homology in the junction. The consensus cleavage sequence is 5'-(A/T)TT(C/G)-3'. Cleavage occurs on the 3'-side of the TT dinucleotide at the point of strand exchange. HJ branch migration catalyzed by RuvA-RuvB allows RuvC to scan DNA until it finds its consensus sequence, where it cleaves and resolves the cruciform DNA. The chain is Crossover junction endodeoxyribonuclease RuvC from Mycobacterium leprae (strain TN).